The chain runs to 86 residues: Small ribosomal subunit protein bS20 (86 aa).

Residues 1–21 (MANTKSAIKAARKSLRLHDRN) are disordered.

This sequence belongs to the bacterial ribosomal protein bS20 family.

In terms of biological role, binds directly to 16S ribosomal RNA. The chain is Small ribosomal subunit protein bS20 from Opitutus terrae (strain DSM 11246 / JCM 15787 / PB90-1).